The chain runs to 507 residues: Maturase K (507 aa).

It belongs to the intron maturase 2 family. MatK subfamily.

It localises to the plastid. The protein resides in the chloroplast. Functionally, usually encoded in the trnK tRNA gene intron. Probably assists in splicing its own and other chloroplast group II introns. The chain is Maturase K from Persea americana (Avocado).